Here is a 689-residue protein sequence, read N- to C-terminus: Beta-galactosidase BbgII (689 aa).

R122 and N160 together coordinate substrate. The active-site Proton donor is the E161. E320 (nucleophile) is an active-site residue. Substrate contacts are provided by residues W328 and 368-371; that span reads EKWH.

It belongs to the glycosyl hydrolase 42 family.

The enzyme catalyses Hydrolysis of terminal non-reducing beta-D-galactose residues in beta-D-galactosides.. The chain is Beta-galactosidase BbgII from Bifidobacterium bifidum (strain DSM 20082 / JCM 1254 / BCRC 11844 / KCTC 3440 / E319f (Variant a)).